We begin with the raw amino-acid sequence, 155 residues long: Peptide deformylase 2 (155 aa).

Residues C90 and H132 each contribute to the Fe cation site. E133 is a catalytic residue. Fe cation is bound at residue H136.

Belongs to the polypeptide deformylase family. The cofactor is Fe(2+).

The enzyme catalyses N-terminal N-formyl-L-methionyl-[peptide] + H2O = N-terminal L-methionyl-[peptide] + formate. Its function is as follows. Removes the formyl group from the N-terminal Met of newly synthesized proteins. Requires at least a dipeptide for an efficient rate of reaction. N-terminal L-methionine is a prerequisite for activity but the enzyme has broad specificity at other positions. The chain is Peptide deformylase 2 from Clostridium perfringens (strain 13 / Type A).